We begin with the raw amino-acid sequence, 148 residues long: Putative nickel-responsive regulator (148 aa).

The Ni(2+) site is built by H88, H99, H101, and C107.

This sequence belongs to the transcriptional regulatory CopG/NikR family. Ni(2+) serves as cofactor.

Transcriptional regulator. This is Putative nickel-responsive regulator from Helicobacter pylori (strain HPAG1).